A 398-amino-acid polypeptide reads, in one-letter code: Elongation factor Tu (398 aa).

The region spanning 10–207 is the tr-type G domain; that stretch reads KPHVNIGTIG…TVDSYIPEPE (198 aa). The interval 19–26 is G1; it reads GHVDHGKT. 19–26 provides a ligand contact to GTP; that stretch reads GHVDHGKT. Thr-26 is a binding site for Mg(2+). The tract at residues 63-67 is G2; the sequence is GITIN. The G3 stretch occupies residues 84-87; the sequence is DAPG. GTP is bound by residues 84–88 and 139–142; these read DAPGH and NKVD. Residues 139–142 form a G4 region; it reads NKVD. The segment at 177–179 is G5; the sequence is SAL.

The protein belongs to the TRAFAC class translation factor GTPase superfamily. Classic translation factor GTPase family. EF-Tu/EF-1A subfamily. In terms of assembly, monomer.

The protein resides in the cytoplasm. It carries out the reaction GTP + H2O = GDP + phosphate + H(+). Its function is as follows. GTP hydrolase that promotes the GTP-dependent binding of aminoacyl-tRNA to the A-site of ribosomes during protein biosynthesis. In Streptococcus equi subsp. zooepidemicus (strain MGCS10565), this protein is Elongation factor Tu.